The chain runs to 498 residues: MSDQPVNTPELRPVLPFSFARAQQILLLQDESVTVAEVVCVPDTPALALLEARRVAGVPLAVSQVSPEEFERQLVMRYQRDSEEARRLMEDIGNDIDFYTLAEELPDSDDLLDGEDDAPIIRLINAMLTEAIKHKASDIHIETFERHLLIRFRIDGVLREILRPQRQLASLLVSRIKVMAKLDIAEKRVPQDGRMALRIGGRAIDVRVSTLPSNYGERVVLRLLDKNSVRLDLEALGMAEHNRRQLDTLIHRPHGIILVTGPTGSGKSTTLYAALSRLNSAERNIMTVEDPIEYELEGIGQTQVNPKVDMTFARGLRAILRQDPDVVLVGEIRDGETAQIAVQASLTGHLVLSTLHTNSALGALSRLQDMGIEPFLLSTSLLGVLAQRLVRTLCPSCRQPYVINDEQAQQTGLAAGTTLYHPGGCEKCNYSGYRGRTGIHELLLIDDTVRTAIHHGESELGIARMLGDKRITIRQDGLDKVLAGVTTWEEVVRVTKEE.

The Zn(2+) site is built by cysteine 394, cysteine 397, cysteine 425, and cysteine 428.

This sequence belongs to the GSP E family. Forms homooligomers; most probably hexamers. Interacts with OutL/GspL. The cofactor is Zn(2+).

It is found in the cell inner membrane. It catalyses the reaction ATP + H2O + cellular proteinSide 1 = ADP + phosphate + cellular proteinSide 2.. ATPase component of the type II secretion system required for the energy-dependent secretion of extracellular factors such as proteases and toxins from the periplasm. Acts as a molecular motor to provide the energy that is required for assembly of the pseudopilus and the extrusion of substrates generated in the cytoplasm. This chain is Type II secretion system protein E (outE), found in Dickeya dadantii (strain 3937) (Erwinia chrysanthemi (strain 3937)).